We begin with the raw amino-acid sequence, 114 residues long: Gas vesicle protein J1 (114 aa).

Residues Leu-13–Asp-22 form an alpha helix 1 region. Beta-strand regions lie at residues Val-25 to Val-35 and Leu-40 to Ala-50. A Conserved in GvpM1/2 but not GvpA motif is present at residues Arg-46 to Ala-50. 3 alpha helix regions span residues Phe-52–Glu-72, Ser-78–Glu-87, and Thr-95–Thr-105. The interval Pro-63–Lys-114 is disordered. Residues Ala-75 to Leu-98 show a composition bias toward polar residues. Residues Ser-99–Lys-114 show a composition bias toward low complexity.

Belongs to the gas vesicle GvpA family. In terms of assembly, gvpF to GvpM interact with each other in vitro, and may form multi-subunit complex(es). Interacts with GvpA1.

It localises to the gas vesicle. Its function is as follows. Proteins GvpF to GvpM might be involved in nucleating gas vesicle formation. Mutagenesis of residues 13-61 shows that almost none of them can be substituted and still make gas vesicles. A minor component of the gas vesicle. Gas vesicles are hollow, gas filled proteinaceous nanostructures found in several microbial planktonic microorganisms. They allow positioning of halobacteria at the optimal depth for growth in the poorly aerated, shallow brine pools of their habitat. Expression of a 9.5 kb p-vac DNA fragment containing 2 divergently transcribed regions (gvpD-gvpE-gvpF-gvpG-gvpH-gvpI-gvpJ-gvpK-gvpL-gvpM and gvpA-gvpC-gvpN-gvpO) allows H.volcanii to produce gas vesicles. All site-directed mutagenesis is tested in H.volcanii. A minimal gas vesicle can be made in H.volcanii by gvpA1-gvpO1 plus gvpF1-gvpG1-gvpJ1-gvpK1-gvpL1-gvpM1; lack of enough GvpJ1 prevents formation. A similar region restores gas vesicle production in H.halobium without the p-vac locus, but it still has the c-vac locus. The chain is Gas vesicle protein J1 (gvpJ11) from Halobacterium salinarum (strain ATCC 700922 / JCM 11081 / NRC-1) (Halobacterium halobium).